Reading from the N-terminus, the 358-residue chain is Extracellular phospholipase C (358 aa).

The protein localises to the secreted. The polypeptide is Extracellular phospholipase C (plcA) (Dickeya chrysanthemi (Pectobacterium chrysanthemi)).